Consider the following 214-residue polypeptide: Cytochrome c biogenesis ATP-binding export protein CcmA (214 aa).

In terms of domain architecture, ABC transporter spans 8–212 (LYAADLACLK…PPTVLDLSEV (205 aa)). 40–47 (GPNGFGKT) is an ATP binding site.

This sequence belongs to the ABC transporter superfamily. CcmA exporter (TC 3.A.1.107) family. In terms of assembly, the complex is composed of two ATP-binding proteins (CcmA) and two transmembrane proteins (CcmB).

The protein localises to the cell inner membrane. The catalysed reaction is heme b(in) + ATP + H2O = heme b(out) + ADP + phosphate + H(+). Functionally, part of the ABC transporter complex CcmAB involved in the biogenesis of c-type cytochromes; once thought to export heme, this seems not to be the case, but its exact role is uncertain. Responsible for energy coupling to the transport system. This chain is Cytochrome c biogenesis ATP-binding export protein CcmA, found in Aromatoleum aromaticum (strain DSM 19018 / LMG 30748 / EbN1) (Azoarcus sp. (strain EbN1)).